The sequence spans 458 residues: Bifunctional protein GlmU (458 aa).

Positions 1 to 231 (MSNRALSVVV…QTEVEGVNNR (231 aa)) are pyrophosphorylase. Residues 11 to 14 (LAAG), Lys25, Gln78, 83 to 84 (GT), 105 to 107 (YGD), Gly142, Glu156, Asn171, and Asn229 contribute to the UDP-N-acetyl-alpha-D-glucosamine site. Asp107 provides a ligand contact to Mg(2+). Asn229 contacts Mg(2+). Residues 232–252 (LQLARLERLFQREQAERLLLA) are linker. Positions 253–458 (GVMLSDPDRF…ANWTRPVKKK (206 aa)) are N-acetyltransferase. The UDP-N-acetyl-alpha-D-glucosamine site is built by Arg335 and Lys353. His365 functions as the Proton acceptor in the catalytic mechanism. Residues Tyr368 and Asn379 each coordinate UDP-N-acetyl-alpha-D-glucosamine. Acetyl-CoA is bound by residues Ala382, 388–389 (NY), Ser407, Ala425, and Arg442.

It in the N-terminal section; belongs to the N-acetylglucosamine-1-phosphate uridyltransferase family. In the C-terminal section; belongs to the transferase hexapeptide repeat family. In terms of assembly, homotrimer. The cofactor is Mg(2+).

The protein resides in the cytoplasm. It carries out the reaction alpha-D-glucosamine 1-phosphate + acetyl-CoA = N-acetyl-alpha-D-glucosamine 1-phosphate + CoA + H(+). The enzyme catalyses N-acetyl-alpha-D-glucosamine 1-phosphate + UTP + H(+) = UDP-N-acetyl-alpha-D-glucosamine + diphosphate. Its pathway is nucleotide-sugar biosynthesis; UDP-N-acetyl-alpha-D-glucosamine biosynthesis; N-acetyl-alpha-D-glucosamine 1-phosphate from alpha-D-glucosamine 6-phosphate (route II): step 2/2. It functions in the pathway nucleotide-sugar biosynthesis; UDP-N-acetyl-alpha-D-glucosamine biosynthesis; UDP-N-acetyl-alpha-D-glucosamine from N-acetyl-alpha-D-glucosamine 1-phosphate: step 1/1. It participates in bacterial outer membrane biogenesis; LPS lipid A biosynthesis. Its function is as follows. Catalyzes the last two sequential reactions in the de novo biosynthetic pathway for UDP-N-acetylglucosamine (UDP-GlcNAc). The C-terminal domain catalyzes the transfer of acetyl group from acetyl coenzyme A to glucosamine-1-phosphate (GlcN-1-P) to produce N-acetylglucosamine-1-phosphate (GlcNAc-1-P), which is converted into UDP-GlcNAc by the transfer of uridine 5-monophosphate (from uridine 5-triphosphate), a reaction catalyzed by the N-terminal domain. The protein is Bifunctional protein GlmU of Sodalis glossinidius (strain morsitans).